Reading from the N-terminus, the 407-residue chain is MSQKMMYEFKRKLEELEKYKGRGTELITLYIPPDKNIADVSNQLRSELSQASNIKSKQTRTNVLAGIEAILNRLKHFRKPPENGMVIISGVVNINGKEKHITEIIEPPEPVPLYKYHCDSKFYLDPLKEMLTEKKLYGLIVLDRREATVGLLKGKRIEVLDWDTSMVPGKHRQGGQSSVRFERLREIAIHEFYKKVGEMASEALLPYKDKLIGILIGGPSPTKEEFYEGEYLHHELQKKVLGLFDVGYTDESGLYELVEKAKDVLQEVDIIREKNLMQRFLKEVARDGLAAYGEEEVRRYIELGAVDTLLLSEDLRYERVKYRCPKCGKEVEVTVREGIEKPPFCEEDNVEMEEVERRDIVLELSELAESTGAKVEFLSTESEEGEMLYKAFGGIAAILRFKPDGGQ.

This sequence belongs to the eukaryotic release factor 1 family. In terms of assembly, heterodimer of two subunits, one of which binds GTP.

It is found in the cytoplasm. Its function is as follows. Directs the termination of nascent peptide synthesis (translation) in response to the termination codons UAA, UAG and UGA. In Archaeoglobus fulgidus (strain ATCC 49558 / DSM 4304 / JCM 9628 / NBRC 100126 / VC-16), this protein is Peptide chain release factor subunit 1 (prf1).